The primary structure comprises 157 residues: Small ribosomal subunit protein uS7 (157 aa).

This sequence belongs to the universal ribosomal protein uS7 family. In terms of assembly, part of the 30S ribosomal subunit. Contacts proteins S9 and S11.

One of the primary rRNA binding proteins, it binds directly to 16S rRNA where it nucleates assembly of the head domain of the 30S subunit. Is located at the subunit interface close to the decoding center, probably blocks exit of the E-site tRNA. This is Small ribosomal subunit protein uS7 from Chlamydia muridarum (strain MoPn / Nigg).